Consider the following 511-residue polypeptide: Putative CBL-interacting protein kinase 13 (511 aa).

The Protein kinase domain occupies 25–279 (FEVGKLLGQG…AEGIMENEWF (255 aa)). ATP-binding positions include 31–39 (LGQGNFAKV) and Lys-54. The Proton acceptor role is filled by Asp-147. Positions 165 to 194 (DFGLSAVADGMRRDGLFHTFCGTPAYVAPE) are activation loop. Residues 307–340 (VDAPTSPPDTPRTVDSGDVGAAPTRPRKAGSLTS) form a disordered region. The NAF domain occupies 321–383 (DSGDVGAAPT…PGFDLSGLFD (63 aa)). Positions 400–429 (KHTARFVSAAPVEVIVATLEAAAAAAGMAV) are PPI.

This sequence belongs to the protein kinase superfamily. CAMK Ser/Thr protein kinase family. SNF1 subfamily. Mn(2+) serves as cofactor.

It carries out the reaction L-seryl-[protein] + ATP = O-phospho-L-seryl-[protein] + ADP + H(+). It catalyses the reaction L-threonyl-[protein] + ATP = O-phospho-L-threonyl-[protein] + ADP + H(+). Its function is as follows. CIPK serine-threonine protein kinases interact with CBL proteins. Binding of a CBL protein to the regulatory NAF domain of CIPK protein lead to the activation of the kinase in a calcium-dependent manner. The sequence is that of Putative CBL-interacting protein kinase 13 (CIPK13) from Oryza sativa subsp. japonica (Rice).